A 215-amino-acid chain; its full sequence is Outer-membrane lipoprotein LolB (215 aa).

The first 21 residues, 1 to 21 (MLIPKKYYLLIILLSNCLLAS), serve as a signal peptide directing secretion. The N-palmitoyl cysteine moiety is linked to residue Cys22. Cys22 is lipidated: S-diacylglycerol cysteine.

Belongs to the LolB family. As to quaternary structure, monomer.

It localises to the cell outer membrane. Functionally, plays a critical role in the incorporation of lipoproteins in the outer membrane after they are released by the LolA protein. The chain is Outer-membrane lipoprotein LolB from Baumannia cicadellinicola subsp. Homalodisca coagulata.